The sequence spans 214 residues: Orotate phosphoribosyltransferase (214 aa).

Position 26 (lysine 26) interacts with 5-phospho-alpha-D-ribose 1-diphosphate. Residue 34–35 participates in orotate binding; the sequence is FF. Residues 72-73, arginine 98, lysine 99, lysine 102, histidine 104, and 123-131 contribute to the 5-phospho-alpha-D-ribose 1-diphosphate site; these read YK and DDVISAGTS. Positions 127 and 155 each coordinate orotate.

This sequence belongs to the purine/pyrimidine phosphoribosyltransferase family. PyrE subfamily. In terms of assembly, homodimer. The cofactor is Mg(2+).

It catalyses the reaction orotidine 5'-phosphate + diphosphate = orotate + 5-phospho-alpha-D-ribose 1-diphosphate. It participates in pyrimidine metabolism; UMP biosynthesis via de novo pathway; UMP from orotate: step 1/2. Its function is as follows. Catalyzes the transfer of a ribosyl phosphate group from 5-phosphoribose 1-diphosphate to orotate, leading to the formation of orotidine monophosphate (OMP). The chain is Orotate phosphoribosyltransferase from Chromobacterium violaceum (strain ATCC 12472 / DSM 30191 / JCM 1249 / CCUG 213 / NBRC 12614 / NCIMB 9131 / NCTC 9757 / MK).